The sequence spans 248 residues: MKILVSNDDGVNAQGLHCLSEALCSLGEVIVVAPDRNRSGASNSLTLENPIRVETLETGKRYSVKGTPTDCVHFAVNKLLDPWPDIVVSGINHGANLGDDVIYSGTVAAATEGRHMGLPAVAVSLVGETHFASAAHYACLLVSRLRTHPLPSDQILNVNVPDLPLEQIKGIKVTRLGNRHRGEKMIVMQDPRGKPVYWIGPPGEKQDAGEGTDFHAIEQGYVSITPLQVDMTAYGSVSELTTWVGEFK.

Residues aspartate 8, aspartate 9, serine 39, and asparagine 92 each contribute to the a divalent metal cation site.

The protein belongs to the SurE nucleotidase family. It depends on a divalent metal cation as a cofactor.

It localises to the cytoplasm. It carries out the reaction a ribonucleoside 5'-phosphate + H2O = a ribonucleoside + phosphate. In terms of biological role, nucleotidase that shows phosphatase activity on nucleoside 5'-monophosphates. The chain is 5'-nucleotidase SurE from Tolumonas auensis (strain DSM 9187 / NBRC 110442 / TA 4).